We begin with the raw amino-acid sequence, 270 residues long: 4-hydroxy-tetrahydrodipicolinate reductase (270 aa).

NAD(+)-binding positions include 9 to 14 (GAGGRM) and Glu-35. Residue Arg-36 participates in NADP(+) binding. Residues 99 to 101 (GTT) and 123 to 126 (ASNY) each bind NAD(+). His-156 functions as the Proton donor/acceptor in the catalytic mechanism. His-157 contributes to the (S)-2,3,4,5-tetrahydrodipicolinate binding site. Catalysis depends on Lys-160, which acts as the Proton donor. Position 166–167 (166–167 (GT)) interacts with (S)-2,3,4,5-tetrahydrodipicolinate.

The protein belongs to the DapB family.

The protein localises to the cytoplasm. The enzyme catalyses (S)-2,3,4,5-tetrahydrodipicolinate + NAD(+) + H2O = (2S,4S)-4-hydroxy-2,3,4,5-tetrahydrodipicolinate + NADH + H(+). The catalysed reaction is (S)-2,3,4,5-tetrahydrodipicolinate + NADP(+) + H2O = (2S,4S)-4-hydroxy-2,3,4,5-tetrahydrodipicolinate + NADPH + H(+). Its pathway is amino-acid biosynthesis; L-lysine biosynthesis via DAP pathway; (S)-tetrahydrodipicolinate from L-aspartate: step 4/4. Its function is as follows. Catalyzes the conversion of 4-hydroxy-tetrahydrodipicolinate (HTPA) to tetrahydrodipicolinate. This Mannheimia succiniciproducens (strain KCTC 0769BP / MBEL55E) protein is 4-hydroxy-tetrahydrodipicolinate reductase.